A 195-amino-acid chain; its full sequence is UPF0316 protein Pcar_2434 (195 aa).

A run of 3 helical transmembrane segments spans residues 13 to 33 (LFLLPLLVFFARIIDVSIGTL), 45 to 65 (WAGVLGFFESLIWVLAISQVM), and 71 to 91 (VWTYIAFALGFATGNYVGVLI).

It belongs to the UPF0316 family.

The protein resides in the cell membrane. In Syntrophotalea carbinolica (strain DSM 2380 / NBRC 103641 / GraBd1) (Pelobacter carbinolicus), this protein is UPF0316 protein Pcar_2434.